A 164-amino-acid polypeptide reads, in one-letter code: S-ribosylhomocysteine lyase (164 aa).

3 residues coordinate Fe cation: histidine 54, histidine 58, and cysteine 128.

This sequence belongs to the LuxS family. In terms of assembly, homodimer. The cofactor is Fe cation.

The catalysed reaction is S-(5-deoxy-D-ribos-5-yl)-L-homocysteine = (S)-4,5-dihydroxypentane-2,3-dione + L-homocysteine. In terms of biological role, involved in the synthesis of autoinducer 2 (AI-2) which is secreted by bacteria and is used to communicate both the cell density and the metabolic potential of the environment. The regulation of gene expression in response to changes in cell density is called quorum sensing. Catalyzes the transformation of S-ribosylhomocysteine (RHC) to homocysteine (HC) and 4,5-dihydroxy-2,3-pentadione (DPD). This is S-ribosylhomocysteine lyase from Campylobacter jejuni subsp. jejuni serotype O:6 (strain 81116 / NCTC 11828).